The following is a 300-amino-acid chain: Ornithine carbamoyltransferase (300 aa).

Residues 49-52, Q76, R100, and 127-130 each bind carbamoyl phosphate; these read STRT and HPCQ. Residues N158, D218, and 222–223 each bind L-ornithine; that span reads SM. Carbamoyl phosphate is bound by residues 258–259 and R286; that span reads CL.

This sequence belongs to the aspartate/ornithine carbamoyltransferase superfamily. OTCase family.

The protein localises to the cytoplasm. It carries out the reaction carbamoyl phosphate + L-ornithine = L-citrulline + phosphate + H(+). It functions in the pathway amino-acid biosynthesis; L-arginine biosynthesis; L-arginine from L-ornithine and carbamoyl phosphate: step 1/3. Functionally, reversibly catalyzes the transfer of the carbamoyl group from carbamoyl phosphate (CP) to the N(epsilon) atom of ornithine (ORN) to produce L-citrulline. This Oleidesulfovibrio alaskensis (strain ATCC BAA-1058 / DSM 17464 / G20) (Desulfovibrio alaskensis) protein is Ornithine carbamoyltransferase.